The chain runs to 291 residues: Dihydroorotate dehydrogenase A (fumarate) (291 aa).

FMN is bound by residues serine 18 and 42 to 43 (KS). Substrate is bound by residues lysine 42, 66–70 (NAVGL), and asparagine 126. Asparagine 126 serves as a coordination point for FMN. The Nucleophile role is filled by cysteine 129. Residues lysine 164 and isoleucine 190 each coordinate FMN. 191–192 (NT) lines the substrate pocket. Residues glycine 216, 242 to 243 (GG), and 264 to 265 (GS) each bind FMN.

It belongs to the dihydroorotate dehydrogenase family. Type 1 subfamily. Homodimer. FMN is required as a cofactor.

It is found in the cytoplasm. It catalyses the reaction (S)-dihydroorotate + fumarate = orotate + succinate. It participates in pyrimidine metabolism; UMP biosynthesis via de novo pathway. Functionally, catalyzes the conversion of dihydroorotate to orotate with fumarate as the electron acceptor. In Lacticaseibacillus paracasei (strain ATCC 334 / BCRC 17002 / CCUG 31169 / CIP 107868 / KCTC 3260 / NRRL B-441) (Lactobacillus paracasei), this protein is Dihydroorotate dehydrogenase A (fumarate) (pyrD).